Here is a 130-residue protein sequence, read N- to C-terminus: Succinate dehydrogenase assembly factor 3, mitochondrial (130 aa).

The N-terminal 8 residues, 1 to 8 (MRPSLLRL), are a transit peptide targeting the mitochondrion.

It belongs to the complex I LYR family. SDHAF3 subfamily. As to quaternary structure, interacts with the iron-sulfur protein subunit within the SDH catalytic dimer.

The protein localises to the mitochondrion matrix. Its function is as follows. Plays an essential role in the assembly of succinate dehydrogenase (SDH), an enzyme complex (also referred to as respiratory complex II) that is a component of both the tricarboxylic acid (TCA) cycle and the mitochondrial electron transport chain, and which couples the oxidation of succinate to fumarate with the reduction of ubiquinone (coenzyme Q) to ubiquinol. Promotes maturation of the iron-sulfur protein subunit of the SDH catalytic dimer, protecting it from the deleterious effects of oxidants. May act together with SDHAF1. This is Succinate dehydrogenase assembly factor 3, mitochondrial from Gibberella zeae (strain ATCC MYA-4620 / CBS 123657 / FGSC 9075 / NRRL 31084 / PH-1) (Wheat head blight fungus).